Reading from the N-terminus, the 413-residue chain is Dolichyl-diphosphooligosaccharide--protein glycosyltransferase 48 kDa subunit (413 aa).

Residues glycine 1–tyrosine 383 lie on the Lumenal side of the membrane. The chain crosses the membrane as a helical span at residues proline 384–leucine 404. The Cytoplasmic segment spans residues histidine 405–aspartate 413.

This sequence belongs to the DDOST 48 kDa subunit family. Component of the oligosaccharyltransferase (OST) complex.

It localises to the endoplasmic reticulum. The protein localises to the endoplasmic reticulum membrane. The protein operates within protein modification; protein glycosylation. Subunit of the oligosaccharyl transferase (OST) complex that catalyzes the initial transfer of a defined glycan (Glc(3)Man(9)GlcNAc(2) in eukaryotes) from the lipid carrier dolichol-pyrophosphate to an asparagine residue within an Asn-X-Ser/Thr consensus motif in nascent polypeptide chains, the first step in protein N-glycosylation. N-glycosylation occurs cotranslationally and the complex associates with the Sec61 complex at the channel-forming translocon complex that mediates protein translocation across the endoplasmic reticulum (ER). All subunits are required for a maximal enzyme activity. Required for the assembly of both SST3A- and SS3B-containing OST complexes. This Gallus gallus (Chicken) protein is Dolichyl-diphosphooligosaccharide--protein glycosyltransferase 48 kDa subunit.